The chain runs to 163 residues: ATP synthase subunit b (163 aa).

The helical transmembrane segment at 13–33 (SFILFVWFCMKYIWPPIIFAI) threads the bilayer.

The protein belongs to the ATPase B chain family. In terms of assembly, F-type ATPases have 2 components, F(1) - the catalytic core - and F(0) - the membrane proton channel. F(1) has five subunits: alpha(3), beta(3), gamma(1), delta(1), epsilon(1). F(0) has three main subunits: a(1), b(2) and c(10-14). The alpha and beta chains form an alternating ring which encloses part of the gamma chain. F(1) is attached to F(0) by a central stalk formed by the gamma and epsilon chains, while a peripheral stalk is formed by the delta and b chains.

Its subcellular location is the cell membrane. F(1)F(0) ATP synthase produces ATP from ADP in the presence of a proton or sodium gradient. F-type ATPases consist of two structural domains, F(1) containing the extramembraneous catalytic core and F(0) containing the membrane proton channel, linked together by a central stalk and a peripheral stalk. During catalysis, ATP synthesis in the catalytic domain of F(1) is coupled via a rotary mechanism of the central stalk subunits to proton translocation. In terms of biological role, component of the F(0) channel, it forms part of the peripheral stalk, linking F(1) to F(0). This Buchnera aphidicola subsp. Schizaphis graminum (strain Sg) protein is ATP synthase subunit b.